Reading from the N-terminus, the 536-residue chain is Probable cytochrome P450 318a1 (536 aa).

A compositionally biased stretch (basic and acidic residues) spans 439–457; it reads EEEQLSKGHNDSGSGEKRR. The segment at 439 to 460 is disordered; the sequence is EEEQLSKGHNDSGSGEKRRQRD. A heme-binding site is contributed by cysteine 477.

It belongs to the cytochrome P450 family. Heme serves as cofactor.

The protein localises to the endoplasmic reticulum membrane. It is found in the microsome membrane. Its function is as follows. May be involved in the metabolism of insect hormones and in the breakdown of synthetic insecticides. The polypeptide is Probable cytochrome P450 318a1 (Cyp318a1) (Drosophila melanogaster (Fruit fly)).